A 307-amino-acid polypeptide reads, in one-letter code: Acetaldehyde dehydrogenase 2 (307 aa).

13-16 contributes to the NAD(+) binding site; the sequence is SGNI. Cysteine 132 functions as the Acyl-thioester intermediate in the catalytic mechanism. NAD(+)-binding positions include 163 to 171 and asparagine 274; that span reads SIGPGTRAN.

This sequence belongs to the acetaldehyde dehydrogenase family.

The enzyme catalyses acetaldehyde + NAD(+) + CoA = acetyl-CoA + NADH + H(+). This Methylibium petroleiphilum (strain ATCC BAA-1232 / LMG 22953 / PM1) protein is Acetaldehyde dehydrogenase 2.